The following is a 200-amino-acid chain: uncharacterized protein (200 aa).

Positions 1–21 (MSNSAQRDARNSRDESARASD) are disordered. Positions 7-21 (RDARNSRDESARASD) are enriched in basic and acidic residues.

This is an uncharacterized protein from Mycobacterium tuberculosis (strain ATCC 25618 / H37Rv).